The sequence spans 505 residues: Glycerol kinase 3 (505 aa).

Thr12 serves as a coordination point for ADP. ATP-binding residues include Thr12, Thr13, and Ser14. Thr12 contributes to the sn-glycerol 3-phosphate binding site. Residue Arg16 participates in ADP binding. Sn-glycerol 3-phosphate contacts are provided by Arg82, Glu83, Tyr134, and Asp249. Glycerol-binding residues include Arg82, Glu83, Tyr134, Asp249, and Gln250. 2 residues coordinate ADP: Thr271 and Gly315. Residues Thr271, Gly315, Gln319, and Gly416 each coordinate ATP. ADP-binding residues include Gly416 and Asn420.

The protein belongs to the FGGY kinase family.

It carries out the reaction glycerol + ATP = sn-glycerol 3-phosphate + ADP + H(+). It functions in the pathway polyol metabolism; glycerol degradation via glycerol kinase pathway; sn-glycerol 3-phosphate from glycerol: step 1/1. Its activity is regulated as follows. Inhibited by fructose 1,6-bisphosphate (FBP). Functionally, key enzyme in the regulation of glycerol uptake and metabolism. Catalyzes the phosphorylation of glycerol to yield sn-glycerol 3-phosphate. The sequence is that of Glycerol kinase 3 from Streptomyces avermitilis (strain ATCC 31267 / DSM 46492 / JCM 5070 / NBRC 14893 / NCIMB 12804 / NRRL 8165 / MA-4680).